Consider the following 23-residue polypeptide: VFQFLGRIIHHVGNFVHGFSHVF.

Position 23 is a phenylalanine amide (phenylalanine 23).

It is found in the secreted. Has antimicrobial activity. The polypeptide is Clavanin-B (Styela clava (Sea squirt)).